The primary structure comprises 119 residues: Ribonuclease P protein component (119 aa).

This sequence belongs to the RnpA family. In terms of assembly, consists of a catalytic RNA component (M1 or rnpB) and a protein subunit.

It carries out the reaction Endonucleolytic cleavage of RNA, removing 5'-extranucleotides from tRNA precursor.. In terms of biological role, RNaseP catalyzes the removal of the 5'-leader sequence from pre-tRNA to produce the mature 5'-terminus. It can also cleave other RNA substrates such as 4.5S RNA. The protein component plays an auxiliary but essential role in vivo by binding to the 5'-leader sequence and broadening the substrate specificity of the ribozyme. The sequence is that of Ribonuclease P protein component from Erwinia tasmaniensis (strain DSM 17950 / CFBP 7177 / CIP 109463 / NCPPB 4357 / Et1/99).